A 496-amino-acid polypeptide reads, in one-letter code: Latent membrane protein 2 (496 aa).

Residues 1 to 108 (MGSLEMVPMG…PPYSPRDDSS (108 aa)) are disordered. The Cytoplasmic segment spans residues 1 to 123 (MGSLEMVPMG…EAGRGSMNPV (123 aa)). The segment covering 27-41 (NNSQYPSASGSSGNT) has biased composition (polar residues). The short motif at 97–101 (PPPPY) is the PPxY motif element. The residue at position 112 (Tyr-112) is a Phosphotyrosine; by host. A helical transmembrane segment spans residues 124 to 144 (CLPVIVAPYLFWLAAIAASCF). Residues 145–147 (TAS) lie on the Extracellular side of the membrane. Residues 148–168 (VSTVVTATGLALSLLLLAAVA) traverse the membrane as a helical segment. At 169 to 177 (SSYAAAQRK) the chain is on the cytoplasmic side. A helical membrane pass occupies residues 178–197 (LLTPVTVLTAVVFFAICLTW). Residues 198–210 (RIEDPPFNSLLFA) lie on the Extracellular side of the membrane. A helical membrane pass occupies residues 211 to 231 (LLAAAGGLQGIYVLVMLVLLI). At 232–240 (LAYRRRWRR) the chain is on the cytoplasmic side. A helical membrane pass occupies residues 241 to 261 (LTVCGGIMFLACVLVLIVDAV). At 262-266 (LQLSP) the chain is on the extracellular side. A helical transmembrane segment spans residues 267 to 287 (LLGAVTVVSMTLLLLAFVLWL). At 288 to 295 (SSPGGLGT) the chain is on the cytoplasmic side. The helical transmembrane segment at 296–316 (LGAALLTLAAALALLASLILG) threads the bilayer. Position 317 (Thr-317) is a topological domain, extracellular. The chain crosses the membrane as a helical span at residues 318–338 (LNLTTMFLLMLLWTLVVLLIC). The Cytoplasmic segment spans residues 339–353 (SSCSSCPLTKILLAR). Residues 354 to 374 (LFLYALALLLLASALIAGGSI) form a helical membrane-spanning segment. The Extracellular segment spans residues 375–387 (LQTNFKSLSSTEF). A helical membrane pass occupies residues 388–408 (IPNLFCMLLLIVAGILFILAI). Residues 409-421 (LTEWGSGNRTYGP) lie on the Cytoplasmic side of the membrane. Residues 422-442 (VFMCLGGLLTMVAGAVWLTVM) form a helical membrane-spanning segment. The Extracellular segment spans residues 443–448 (TNTLLS). A helical membrane pass occupies residues 449 to 469 (AWILTAGFLIFLIGFALFGVI). Residues 470 to 496 (RCCRYCCYYCLTLESEERPPTPYRNTV) lie on the Cytoplasmic side of the membrane.

The protein belongs to the herpesviridae LMP-2 family. As to quaternary structure, the cytoplasmic N-terminal domain interacts with human SRC family protein tyrosine kinases SYK and LYN. Binds human ITCH, WWP2 and NEDD4L. Post-translationally, phosphorylated on cytoplasmic N-terminal tyrosine residues, possibly by human LYN. In terms of processing, can be ubiquitinated by human ITCH and WWP2 on the N-terminus in a lysine-independent manner.

It is found in the host cell membrane. The protein localises to the host endomembrane system. The protein resides in the host cytoplasm. It localises to the host perinuclear region. In terms of biological role, maintains EBV latent infection of B-lymphocyte, by preventing lytic reactivation of the virus in response to surface immunoglobulin (sIg) cross-linking. Acts like a dominant negative inhibitor of the sIg-associated protein tyrosine kinases, LYN and SYK. Also blocks translocation of the B-cell antigen receptor (BCR) into lipid rafts, preventing the subsequent signaling and accelerated internalization of the BCR upon BCR cross-linking. Serves as a molecular scaffold to recruit SYK, LYN and E3 protein-ubiquitin ligases, such as ITCH and NEDD4L, leading to ubiquitination and potential degradation of both tyrosines kinases. Possesses a constitutive signaling activity in non-transformed cells, inducing bypass of normal B lymphocyte developmental checkpoints allowing immunoglobulin-negative cells to colonize peripheral lymphoid organs. May be a negative regulator of isoform LMP2A. The protein is Latent membrane protein 2 (LMP2) of Homo sapiens (Human).